Reading from the N-terminus, the 549-residue chain is Lysine-specific demethylase JMJ31 (549 aa).

A JmjC domain is found at Asp125–Tyr296. His184, Asp186, and His266 together coordinate Fe cation.

The protein belongs to the JARID1 histone demethylase family. Fe(2+) is required as a cofactor. As to expression, mostly expressed in leaves and inflorescences, and, to a lower extent, in roots, siliques and stems.

The protein resides in the nucleus. In terms of biological role, may function as histone H3 lysine demethylase and be involved in regulation of gene expression. The protein is Lysine-specific demethylase JMJ31 of Arabidopsis thaliana (Mouse-ear cress).